The primary structure comprises 711 residues: DNA ligase (711 aa).

Residues 1 to 29 (MSEDAIGQQVPAAQEAAAGAEPNSAARER) are disordered. A compositionally biased stretch (low complexity) spans 12 to 25 (AAQEAAAGAEPNSA). NAD(+)-binding positions include 54–58 (DAAFD), 103–104 (SL), and glutamate 133. Lysine 135 functions as the N6-AMP-lysine intermediate in the catalytic mechanism. NAD(+) contacts are provided by arginine 156, glutamate 197, lysine 313, and lysine 337. Cysteine 431, cysteine 434, cysteine 450, and cysteine 456 together coordinate Zn(2+). One can recognise a BRCT domain in the interval 620–709 (QGPRPLEGVT…PEAARAVARV (90 aa)).

The protein belongs to the NAD-dependent DNA ligase family. LigA subfamily. It depends on Mg(2+) as a cofactor. Mn(2+) is required as a cofactor.

It catalyses the reaction NAD(+) + (deoxyribonucleotide)n-3'-hydroxyl + 5'-phospho-(deoxyribonucleotide)m = (deoxyribonucleotide)n+m + AMP + beta-nicotinamide D-nucleotide.. Its function is as follows. DNA ligase that catalyzes the formation of phosphodiester linkages between 5'-phosphoryl and 3'-hydroxyl groups in double-stranded DNA using NAD as a coenzyme and as the energy source for the reaction. It is essential for DNA replication and repair of damaged DNA. The chain is DNA ligase from Salinispora tropica (strain ATCC BAA-916 / DSM 44818 / JCM 13857 / NBRC 105044 / CNB-440).